Reading from the N-terminus, the 648-residue chain is Pesticidal crystal protein Cry19Aa (648 aa).

This sequence belongs to the delta endotoxin family.

In terms of biological role, promotes colloidosmotic lysis by binding to the midgut epithelial cells of mosquitos. The polypeptide is Pesticidal crystal protein Cry19Aa (cry19Aa) (Bacillus thuringiensis subsp. jegathesan).